The following is a 350-amino-acid chain: tRNA uridine(34) hydroxylase (350 aa).

The region spanning 146 to 240 (DDPEAVFVDM…YARRAREQGL (95 aa)) is the Rhodanese domain. C200 functions as the Cysteine persulfide intermediate in the catalytic mechanism.

It belongs to the TrhO family.

The enzyme catalyses uridine(34) in tRNA + AH2 + O2 = 5-hydroxyuridine(34) in tRNA + A + H2O. Functionally, catalyzes oxygen-dependent 5-hydroxyuridine (ho5U) modification at position 34 in tRNAs. This is tRNA uridine(34) hydroxylase from Erwinia tasmaniensis (strain DSM 17950 / CFBP 7177 / CIP 109463 / NCPPB 4357 / Et1/99).